A 294-amino-acid chain; its full sequence is Lipoyl synthase (294 aa).

[4Fe-4S] cluster is bound by residues Cys35, Cys40, Cys46, Cys61, Cys65, Cys68, and Ser275. Positions 46–264 (CWGGGTATVM…RDQGLALGFR (219 aa)) constitute a Radical SAM core domain.

It belongs to the radical SAM superfamily. Lipoyl synthase family. [4Fe-4S] cluster is required as a cofactor.

It localises to the cytoplasm. It catalyses the reaction [[Fe-S] cluster scaffold protein carrying a second [4Fe-4S](2+) cluster] + N(6)-octanoyl-L-lysyl-[protein] + 2 oxidized [2Fe-2S]-[ferredoxin] + 2 S-adenosyl-L-methionine + 4 H(+) = [[Fe-S] cluster scaffold protein] + N(6)-[(R)-dihydrolipoyl]-L-lysyl-[protein] + 4 Fe(3+) + 2 hydrogen sulfide + 2 5'-deoxyadenosine + 2 L-methionine + 2 reduced [2Fe-2S]-[ferredoxin]. It functions in the pathway protein modification; protein lipoylation via endogenous pathway; protein N(6)-(lipoyl)lysine from octanoyl-[acyl-carrier-protein]: step 2/2. In terms of biological role, catalyzes the radical-mediated insertion of two sulfur atoms into the C-6 and C-8 positions of the octanoyl moiety bound to the lipoyl domains of lipoate-dependent enzymes, thereby converting the octanoylated domains into lipoylated derivatives. In Anaeromyxobacter dehalogenans (strain 2CP-C), this protein is Lipoyl synthase.